The primary structure comprises 3122 residues: MIPAALPHPTMKRQGDRDIVVTGVRNQFATDLEPGGSVSCMRSSLSFLSLLFDVGPRDVLSAEAIEGCLVEGGEWTRAAAGSGPPRMCSIIELPNFLEYPAARGGLRCVFSRVYGEVGFFGEPTAGLLETQCPAHTFFAGPWAMRPLSYTLLTIGPLGMGLYRDGDTAYLFDPHGLPAGTPAFIAKVRAGDVYPYLTYYAHDRPKVRWAGAMVFFVPSGPGAVAPADLTAAALHLYGASETYLQDEPFVERRVAITHPLRGEIGGLGALFVGVVPRGDGEGSGPVVPALPAPTHVQTPGADRPPEAPRGASGPPDTPQAGHPNRPPDDVWAAALEGTPPAKPSAPDAAASGPPHAAPPPQTPAGDAAEEAEDLRVLEVGAVPVGRHRARYSTGLPKRRRPTWTPPSSVEDLTSGERPAPKAPPAKAKKKSAPKKKAPVAAEVPASSPTPIAATVPPAPDTPPQSGQGGGDDGPASPSSPSVLETLGARRPPEPPGADLAQLFEVHPNVAATAVRLAARDAALAREVAACSQLTINALRSPYPAHPGLLELCVIFFFERVLAFLIENGARTHTQAGVAGPAAALLDFTLRMLPRKTAVGDFLASTRMSLADVAAHRPLIQHVLDENSQIGRLALAKLVLVARDVIRETDAFYGDLADLDLQLRAAPPANLYARLGEWLLERSRAHPNTLFAPATPTHPEPLLHRIQALAQFARGEEMRVEAEAREMREALDALARGVDSVSQRAGPLTVMPVPAAPGAGGRAPCPPALGPEAIQARLEDVRIQARRAIESAVKEYFHRGAVYSAKALQASDSHDCRFHVASAAVVPMVQLLESLPAFDQHTRDVAQRAALPPPPPLATSPQAILLRDLLQRGQPLDAPEDLAAWLSVLTDAATQGLIERKPLEELARSIHGINDQQARRSSGLAELQRFDALDAALAQQLDSDAAFVPATGPAPYVDGGGLSPEATRMAEDALRQARAMEAAKMTAELAPEARSRLRERAHALEAMLNDARERAKVAHDAREKFLHKLQGVLRPLPDFVGLKACPAVLATLRASLPAGWTDLADAVRGPPPEVTAALRADLWGLLGQYREALEHPTPDTATALAGLHPAFVVVLKTLFADAPETPVLVQFFSDHAPTIAKAVSNAINAGSAAVATASPAATVDAAVRAHGALADAVSALGAAARDPASPLSFLAVLADSAAGYVKATRLALEARGAIDELTTLGSAAADLVVQARRACAQPEGDHAALIDAAARATTAARESLAGHEAGFGGLLHAEGTAGDHSPSGRALQELGKVIGATRRRADELEAAVADLTAKMAAQRARGSSERWAAGVEAALDRVENRAEFDVVELRRLQALAGTHGYNPRDFRKRAEQALAANAEAVTLALDTAFAFNPYTPENQRHPMLPPLAAIHRLGWSAAFHAAAETYADMFRVDAEPLARLLRIAEGLLEMAQAGDGFIDYHEAVGRLADDMTSVPGLRRYVPFFQHGYADYVELRDRLDAIRADVHRALGGVPLDLAAAAEQISAARNDPEATAELVRTGVTLPCPSEDALVACAAALERVDQSPVKNTAYAEYVAFVTRQDTAETKDAVVRAKQQRAEATERVMAGLREALAARERRAQIEAEGLANLKTMLKVVAVPATVAKTLDQARSVAEIADQVEVLLDQTEKTRELDVPAVIWLEHAQRTFETHPLSAARGDGPGPLARHAGRLGALFDTRRRVDALRRSLEEAEAEWDEVWGRFGRVRGGAWKSPEGFRAMHEQLRALQDTTNTVSGLRAQPAYERLSARYQGVLGAKGAERAEAVEELGARVTKHTALCARLRDEVVRRVPWEMNFDALGGLLAEFDAAAADLAPWAVEEFRGARELIQYRMGLYSAYARAGGQTGAGAESAPAPLLVDLRALDARARASSSPEGHEVDPQLLRRRGEAYLRAGGDPGPLVLREAVSALDLPFATSFLAPDGTPLQYALCFPAVTDKLGALLMRPEAACVRPPLPTDVLESAPTVTAMYVLTVVNRLQLALSDAQAANFQLFGRFVRHRQATWGASMDAAAELYVALVATTLTREFGCRWAQLGWASGAAAPRPPPGPRGSQRHCVAFNENDVLVALVAGVPEHIYNFWRLDLVRQHEYMHLTLERAFEDAAESMLFVQRLTPHPDARIRVLPTFLDGGPPTRGLLFGTRLADWRRGKLSETDPLAPWRSALELGTQRRDVPALGKLSPAQALAAVSVLGRMCLPSAALAALWTCMFPDDYTEYDSFDALLAARLESGQTLGPAGGREASLPEAPHALYRPTGQHVAVLAAATHRTPAARVTAMDLVLAAVLLGAPVVVALRNTTAFSRESELELCLTLFDSRPGGPDAALRDVVSSDIETWAVGLLHTDLNPIENACLAAQLPRLSALIAERPLADGPPCLVLVDISMTPVAVLWEAPEPPGPPDVRFVGSEATEELPFVATAGDVLAASAADADPFFARAILGRPFDASLLTGELFPGHPVYQRPLADEAGPSAPTAARDPRDLAGGDGGSGPEDPAAPPARQADPGVLAPTLLTDATTGEPVPPRMWAWIHGLEELASDDAGGPTPNPAPALLPPPATDQSVPTSQYAPRPIGPAATARETRPSVPPQQNTGRVPVAPRDDPRPSPPTPSPPADAALPPPAFSGSAAAFSAAVPRVRRSRRTRAKSRAPRASAPPEGWRPPALPAPVAPVAASARPPDQPPTPESAPPAWVSALPLPPGPASARGAFPAPTLAPIPPPPAEGAVVPGGDRRRGRRQTTAGPSPTPPRGPAAGPPRRLTRPAVASLSASLNSLPSPRDPADHAAAVSAAAAAVPPSPGLAPPTSAVQTSPPPLAPGPVAPSEPLCGWVVPGGPVARRPPPQSPATKPAARTRIRARSVPQPPLPQPPLPQPPLPQPPLPQPPLPQPPLPQPPLPQPPLPQPPLPQPPLPQPPLPPVTRTLTPQSRDSVPTPESPTHTNTHLPVSAVTSWASSLALHVDSAPPPASLLQTLHISSDDEHSDADSLRFSDSDDTEALDPLPPEPHLPPADEPPGPLAADHLQSPHSQFGPLPVQANAVLSRRYVRSTGRSALAVLIRACRRIQQQLQRTRRALFQRSNAVLTSLHHVRMLLG.

Positions 1 to 248 (MIPAALPHPT…SETYLQDEPF (248 aa)) are deubiquitination activity. A Peptidase C76 domain is found at 20 to 238 (VVTGVRNQFA…TAAALHLYGA (219 aa)). Residues cysteine 40, aspartate 172, and histidine 174 contribute to the active site. Disordered stretches follow at residues 281-367 (GSGP…GDAA) and 387-496 (RARY…PPGA). Positions 343–353 (SAPDAAASGPP) are enriched in low complexity. Composition is skewed to basic residues over residues 387–400 (RARY…RRRP) and 425–436 (KAKKKSAPKKKA). The segment covering 437–454 (PVAAEVPASSPTPIAATV) has biased composition (low complexity). Residues 548–578 (LELCVIFFFERVLAFLIENGARTHTQAGVAG) are interaction with inner tegument protein. 3 disordered regions span residues 2494–2539 (YQRP…ADPG), 2570–2974 (ASDD…THLP), and 3006–3059 (SDDE…SQFG). Pro residues-rich tracts occupy residues 2578–2590 (TPNP…PPPA) and 2637–2654 (PSPP…PPPA). The segment covering 2655–2667 (FSGSAAAFSAAVP) has biased composition (low complexity). The segment covering 2668-2681 (RVRRSRRTRAKSRA) has biased composition (basic residues). 2 stretches are compositionally biased toward pro residues: residues 2690–2700 (GWRPPALPAPV) and 2710–2719 (PDQPPTPESA). Residues 2734–2743 (ASARGAFPAP) are compositionally biased toward low complexity. Pro residues-rich tracts occupy residues 2744–2753 (TLAPIPPPPA) and 2775–2785 (SPTPPRGPAAG). Composition is skewed to low complexity over residues 2786 to 2807 (PPRR…SLPS) and 2814 to 2825 (HAAAVSAAAAAV). Positions 2841–2852 (SPPPLAPGPVAP) are enriched in pro residues. Positions 2853–2867 (SEPLCGWVVPGGPVA) are enriched in low complexity. 11 repeat units span residues 2891–2895 (PQPPL), 2896–2900 (PQPPL), 2901–2905 (PQPPL), 2906–2910 (PQPPL), 2911–2915 (PQPPL), 2916–2920 (PQPPL), 2921–2925 (PQPPL), 2926–2930 (PQPPL), 2931–2935 (PQPPL), 2936–2940 (PQPPL), and 2941–2945 (PQPPL). The 11 X 5 AA tandem repeats of P-Q-P-P-L stretch occupies residues 2891-2945 (PQPPLPQPPLPQPPLPQPPLPQPPLPQPPLPQPPLPQPPLPQPPLPQPPLPQPPL). Residues 2891–2947 (PQPPLPQPPLPQPPLPQPPLPQPPLPQPPLPQPPLPQPPLPQPPLPQPPLPQPPLPP) show a composition bias toward pro residues. Polar residues-rich tracts occupy residues 2950–2959 (RTLTPQSRDS) and 2965–2974 (SPTHTNTHLP). Basic and acidic residues predominate over residues 3006–3020 (SDDEHSDADSLRFSD). Over residues 3029–3045 (PLPPEPHLPPADEPPGP) the composition is skewed to pro residues.

This sequence belongs to the herpesviridae large tegument protein family. Interacts with host CUL1 and CUL4A; these interactions inhibit the E3 ligase activity of cullins. Interacts with inner tegument protein. Interacts with capsid vertex specific component CVC2. Interacts with the major capsid protein/MCP. Proteolytically processed, possibly into several polypeptides. Enzymatic activity is only detectable following cleavage of the UL36 protein, which occurs late during viral replication.

It localises to the virion tegument. Its subcellular location is the host cytoplasm. The protein localises to the host nucleus. It catalyses the reaction Thiol-dependent hydrolysis of ester, thioester, amide, peptide and isopeptide bonds formed by the C-terminal Gly of ubiquitin (a 76-residue protein attached to proteins as an intracellular targeting signal).. In terms of biological role, large tegument protein that plays multiple roles in the viral cycle. During viral entry, remains associated with the capsid while most of the tegument is detached and participates in the capsid transport toward the host nucleus. Plays a role in the routing of the capsid at the nuclear pore complex and subsequent uncoating. Within the host nucleus, acts as a deneddylase and promotes the degradation of nuclear CRLs (cullin-RING ubiquitin ligases) and thereby stabilizes nuclear CRL substrates, while cytoplasmic CRLs remain unaffected. These modifications prevent host cell cycle S-phase progression and create a favorable environment allowing efficient viral genome replication. Participates later in the secondary envelopment of capsids. Indeed, plays a linker role for the association of the outer viral tegument to the capsids together with the inner tegument protein. This is Large tegument protein deneddylase from Human herpesvirus 2 (strain HG52) (HHV-2).